The primary structure comprises 441 residues: Arginine biosynthesis bifunctional protein ArgJ, mitochondrial (441 aa).

6 residues coordinate substrate: threonine 178, lysine 204, threonine 215, glutamate 304, asparagine 436, and serine 441. The active-site Nucleophile is threonine 215.

This sequence belongs to the ArgJ family. As to quaternary structure, heterodimer of an alpha and a beta chain. Post-translationally, the alpha and beta chains are autoproteolytically processed from a single precursor protein within the mitochondrion.

Its subcellular location is the mitochondrion matrix. The catalysed reaction is N(2)-acetyl-L-ornithine + L-glutamate = N-acetyl-L-glutamate + L-ornithine. It carries out the reaction L-glutamate + acetyl-CoA = N-acetyl-L-glutamate + CoA + H(+). The protein operates within amino-acid biosynthesis; L-arginine biosynthesis; L-ornithine and N-acetyl-L-glutamate from L-glutamate and N(2)-acetyl-L-ornithine (cyclic): step 1/1. It participates in amino-acid biosynthesis; L-arginine biosynthesis; N(2)-acetyl-L-ornithine from L-glutamate: step 1/4. Functionally, catalyzes two activities which are involved in the cyclic version of arginine biosynthesis: the synthesis of acetylglutamate from glutamate and acetyl-CoA, and of ornithine by transacetylation between acetylornithine and glutamate. The sequence is that of Arginine biosynthesis bifunctional protein ArgJ, mitochondrial from Lodderomyces elongisporus (strain ATCC 11503 / CBS 2605 / JCM 1781 / NBRC 1676 / NRRL YB-4239) (Yeast).